We begin with the raw amino-acid sequence, 213 residues long: Orotate phosphoribosyltransferase (213 aa).

Position 26 (K26) interacts with 5-phospho-alpha-D-ribose 1-diphosphate. 34–35 (FF) contributes to the orotate binding site. 5-phospho-alpha-D-ribose 1-diphosphate contacts are provided by residues 72–73 (YK), R99, K100, K103, H105, and 124–132 (DDVITAGTA). 2 residues coordinate orotate: T128 and R156.

The protein belongs to the purine/pyrimidine phosphoribosyltransferase family. PyrE subfamily. As to quaternary structure, homodimer. Requires Mg(2+) as cofactor.

The enzyme catalyses orotidine 5'-phosphate + diphosphate = orotate + 5-phospho-alpha-D-ribose 1-diphosphate. The protein operates within pyrimidine metabolism; UMP biosynthesis via de novo pathway; UMP from orotate: step 1/2. Its function is as follows. Catalyzes the transfer of a ribosyl phosphate group from 5-phosphoribose 1-diphosphate to orotate, leading to the formation of orotidine monophosphate (OMP). This Photorhabdus laumondii subsp. laumondii (strain DSM 15139 / CIP 105565 / TT01) (Photorhabdus luminescens subsp. laumondii) protein is Orotate phosphoribosyltransferase.